Here is a 776-residue protein sequence, read N- to C-terminus: G protein-regulated inducer of neurite outgrowth 3 (776 aa).

2 disordered regions span residues 1-37 (MGTV…RHRP) and 68-312 (VCEH…IKEV). The span at 101 to 118 (QLPGSSQPAASAPSSAAG) shows a compositional bias: low complexity. 2 stretches are compositionally biased toward polar residues: residues 129–161 (PANQ…SQRT) and 193–203 (ETIQGTVQTPV). Positions 208 to 217 (VVSHSSSPVG) are enriched in low complexity. Residues 242–274 (SGCSENKQPSVTASGPQGTTSVTPQPTPLTSEP) are compositionally biased toward polar residues. Residues serine 332 and serine 365 each carry the phosphoserine modification. 2 disordered regions span residues 518–637 (ISKA…RPSR) and 723–748 (LIKT…LRGR). The span at 520–552 (KADHSGSLDPTNKGDAREKKPASPQVVKEKEST) shows a compositional bias: basic and acidic residues. A compositionally biased stretch (polar residues) spans 566-580 (PKSQESGGTESAANP). The span at 604 to 620 (SLSLPSDPMGDSSPGSG) shows a compositional bias: low complexity. The span at 725 to 742 (KTQNSQTRRSISSDTSSN) shows a compositional bias: polar residues.

Functionally, may be involved in neurite outgrowth. This chain is G protein-regulated inducer of neurite outgrowth 3 (GPRIN3), found in Homo sapiens (Human).